Consider the following 286-residue polypeptide: Homoserine kinase (286 aa).

78-88 (PLARGLGSSSS) provides a ligand contact to ATP.

The protein belongs to the GHMP kinase family. Homoserine kinase subfamily.

The protein localises to the cytoplasm. It catalyses the reaction L-homoserine + ATP = O-phospho-L-homoserine + ADP + H(+). The protein operates within amino-acid biosynthesis; L-threonine biosynthesis; L-threonine from L-aspartate: step 4/5. Its function is as follows. Catalyzes the ATP-dependent phosphorylation of L-homoserine to L-homoserine phosphate. This chain is Homoserine kinase, found in Streptococcus equi subsp. equi (strain 4047).